The primary structure comprises 537 residues: Periplasmic murein peptide-binding protein MppA (537 aa).

Positions 1 to 22 are cleaved as a signal peptide; it reads MKHSVSVTCCALLVSSISLSYA. Residues Lys-42, Val-54, Leu-56, Gln-289, Arg-424, Ser-435, Val-437, Asp-439, and Thr-506 each coordinate L-alanyl-gamma-D-glutamyl-meso-2,6-diaminopimelate.

The protein belongs to the bacterial solute-binding protein 5 family. In terms of assembly, the complex is composed of two ATP-binding proteins (OppD and OppF), two transmembrane proteins (OppB and OppC) and a solute-binding protein (MppA).

It localises to the periplasm. Functionally, part of the ABC transporter complex MppA-OppBCDF involved in the uptake of the cell wall murein tripeptide L-alanyl-gamma-D-glutamyl-meso-diaminopimelate. Is involved in the recycling of cell wall peptides. Binds the cell wall peptide L-Ala-D-Gly-gamma-meso-diaminopimelic acid. Can also transport ordinary alpha-linked tripeptides such as Pro-Phe-Lys, but with much lower efficiency than OppA. Cannot bind typical tripeptides such as Lys-Glu-Lys, Lys-Lys-Lys or Ala-Ala-Ala. The polypeptide is Periplasmic murein peptide-binding protein MppA (Escherichia coli (strain K12)).